The chain runs to 884 residues: Alanine--tRNA ligase (884 aa).

Residues H572, H576, C673, and H677 each coordinate Zn(2+).

The protein belongs to the class-II aminoacyl-tRNA synthetase family. Requires Zn(2+) as cofactor.

It is found in the cytoplasm. The catalysed reaction is tRNA(Ala) + L-alanine + ATP = L-alanyl-tRNA(Ala) + AMP + diphosphate. Functionally, catalyzes the attachment of alanine to tRNA(Ala) in a two-step reaction: alanine is first activated by ATP to form Ala-AMP and then transferred to the acceptor end of tRNA(Ala). Also edits incorrectly charged Ser-tRNA(Ala) and Gly-tRNA(Ala) via its editing domain. This Xylella fastidiosa (strain M12) protein is Alanine--tRNA ligase.